Consider the following 234-residue polypeptide: Triosephosphate isomerase (234 aa).

8-10 provides a ligand contact to substrate; sequence NFK. Histidine 90 functions as the Electrophile in the catalytic mechanism. The Proton acceptor role is filled by glutamate 159. Substrate contacts are provided by glycine 165 and serine 197.

This sequence belongs to the triosephosphate isomerase family. Homodimer.

The protein resides in the cytoplasm. It carries out the reaction D-glyceraldehyde 3-phosphate = dihydroxyacetone phosphate. It participates in carbohydrate biosynthesis; gluconeogenesis. It functions in the pathway carbohydrate degradation; glycolysis; D-glyceraldehyde 3-phosphate from glycerone phosphate: step 1/1. In terms of biological role, involved in the gluconeogenesis. Catalyzes stereospecifically the conversion of dihydroxyacetone phosphate (DHAP) to D-glyceraldehyde-3-phosphate (G3P). This chain is Triosephosphate isomerase, found in Helicobacter acinonychis (strain Sheeba).